Consider the following 30-residue polypeptide: Sperm protamine P5 (30 aa).

Residues 1–30 (YRRRRRRGRRGRRRRGRRRRSRGRRRAHGG) are disordered.

As to expression, testis.

The protein localises to the nucleus. It is found in the chromosome. Its function is as follows. Protamines substitute for histones in the chromatin of sperm during the haploid phase of spermatogenesis. They compact sperm DNA into a highly condensed, stable and inactive complex. The polypeptide is Sperm protamine P5 (Octopus vulgaris (Common octopus)).